Consider the following 1297-residue polypeptide: Phosphoribosylformylglycinamidine synthase (1297 aa).

ATP-binding positions include 307–318 (GASTGSGGEIRD) and alanine 678. Residues glutamate 718, asparagine 722, and aspartate 886 each contribute to the Mg(2+) site. Residues 1044–1297 (MAILREQGVN…MFQNARKNLG (254 aa)) enclose the Glutamine amidotransferase type-1 domain. Catalysis depends on cysteine 1137, which acts as the Nucleophile. Active-site residues include histidine 1262 and glutamate 1264.

It in the N-terminal section; belongs to the FGAMS family. In terms of assembly, monomer.

It is found in the cytoplasm. The catalysed reaction is N(2)-formyl-N(1)-(5-phospho-beta-D-ribosyl)glycinamide + L-glutamine + ATP + H2O = 2-formamido-N(1)-(5-O-phospho-beta-D-ribosyl)acetamidine + L-glutamate + ADP + phosphate + H(+). Its pathway is purine metabolism; IMP biosynthesis via de novo pathway; 5-amino-1-(5-phospho-D-ribosyl)imidazole from N(2)-formyl-N(1)-(5-phospho-D-ribosyl)glycinamide: step 1/2. Its function is as follows. Phosphoribosylformylglycinamidine synthase involved in the purines biosynthetic pathway. Catalyzes the ATP-dependent conversion of formylglycinamide ribonucleotide (FGAR) and glutamine to yield formylglycinamidine ribonucleotide (FGAM) and glutamate. The protein is Phosphoribosylformylglycinamidine synthase of Vibrio vulnificus (strain CMCP6).